We begin with the raw amino-acid sequence, 137 residues long: Small ribosomal subunit protein uS12 (137 aa).

Positions 1 to 26 (MPTINQLVTKGRKRKASKTKSPALNQ) are disordered.

Belongs to the universal ribosomal protein uS12 family. As to quaternary structure, part of the 30S ribosomal subunit. Contacts proteins S8 and S17. May interact with IF1 in the 30S initiation complex.

Its function is as follows. With S4 and S5 plays an important role in translational accuracy. Functionally, interacts with and stabilizes bases of the 16S rRNA that are involved in tRNA selection in the A site and with the mRNA backbone. Located at the interface of the 30S and 50S subunits, it traverses the body of the 30S subunit contacting proteins on the other side and probably holding the rRNA structure together. The combined cluster of proteins S8, S12 and S17 appears to hold together the shoulder and platform of the 30S subunit. This is Small ribosomal subunit protein uS12 from Mycoplasmopsis pulmonis (strain UAB CTIP) (Mycoplasma pulmonis).